A 149-amino-acid polypeptide reads, in one-letter code: Arginine repressor (149 aa).

Belongs to the ArgR family.

The protein localises to the cytoplasm. Its pathway is amino-acid biosynthesis; L-arginine biosynthesis [regulation]. Regulates arginine biosynthesis genes. This chain is Arginine repressor, found in Shouchella clausii (strain KSM-K16) (Alkalihalobacillus clausii).